A 309-amino-acid polypeptide reads, in one-letter code: Homoserine O-succinyltransferase (309 aa).

Cys-142 (acyl-thioester intermediate) is an active-site residue. Positions 163 and 192 each coordinate substrate. His-235 (proton acceptor) is an active-site residue. Glu-237 is an active-site residue. Arg-249 contacts substrate.

The protein belongs to the MetA family. In terms of assembly, homodimer.

The protein resides in the cytoplasm. The enzyme catalyses L-homoserine + succinyl-CoA = O-succinyl-L-homoserine + CoA. Its pathway is amino-acid biosynthesis; L-methionine biosynthesis via de novo pathway; O-succinyl-L-homoserine from L-homoserine: step 1/1. In terms of biological role, transfers a succinyl group from succinyl-CoA to L-homoserine, forming succinyl-L-homoserine. The sequence is that of Homoserine O-succinyltransferase from Escherichia coli (strain ATCC 8739 / DSM 1576 / NBRC 3972 / NCIMB 8545 / WDCM 00012 / Crooks).